The primary structure comprises 327 residues: Tryptophan--tRNA ligase (327 aa).

ATP-binding positions include 9–11 (QPS) and 17–18 (GN). The 'HIGH' region signature appears at 10–18 (PSGDIHIGN). Aspartate 132 contacts L-tryptophan. ATP is bound by residues 144-146 (GED), isoleucine 183, and 192-196 (KMSKS). The 'KMSKS' region motif lies at 192–196 (KMSKS).

This sequence belongs to the class-I aminoacyl-tRNA synthetase family. In terms of assembly, homodimer.

It localises to the cytoplasm. The enzyme catalyses tRNA(Trp) + L-tryptophan + ATP = L-tryptophyl-tRNA(Trp) + AMP + diphosphate + H(+). Its function is as follows. Catalyzes the attachment of tryptophan to tRNA(Trp). The sequence is that of Tryptophan--tRNA ligase from Caldanaerobacter subterraneus subsp. tengcongensis (strain DSM 15242 / JCM 11007 / NBRC 100824 / MB4) (Thermoanaerobacter tengcongensis).